The primary structure comprises 304 residues: Glucose-6-phosphate isomerase (304 aa).

Glu-146 acts as the Proton donor in catalysis. Residue His-177 is part of the active site.

This sequence belongs to the GPI family.

It localises to the cytoplasm. The catalysed reaction is alpha-D-glucose 6-phosphate = beta-D-fructose 6-phosphate. It participates in carbohydrate degradation; glycolysis; D-glyceraldehyde 3-phosphate and glycerone phosphate from D-glucose: step 2/4. The polypeptide is Glucose-6-phosphate isomerase (PGI) (Calanus finmarchicus (Calanus tonsus)).